We begin with the raw amino-acid sequence, 641 residues long: Mannosyl-oligosaccharide 1,2-alpha-mannosidase IB (641 aa).

T2 carries the N-acetylthreonine modification. The Cytoplasmic portion of the chain corresponds to 2 to 36 (TTPALLPLSGRRIPPLNLGPPSFPHHRATLRLSEK). A helical; Signal-anchor for type II membrane protein transmembrane segment spans residues 37–57 (FILLLILSAFITLCFGAFFFL). Over 58–641 (PDSSKHKRFD…STLSGNPAVR (584 aa)) the chain is Lumenal. The cysteines at positions 462 and 494 are disulfide-linked. The active-site Proton donor is E508. Residue T619 coordinates Ca(2+). An N-linked (GlcNAc...) asparagine glycan is attached at N631.

Belongs to the glycosyl hydrolase 47 family. Ca(2+) serves as cofactor.

It localises to the golgi apparatus membrane. It carries out the reaction N(4)-(alpha-D-Man-(1-&gt;2)-alpha-D-Man-(1-&gt;2)-alpha-D-Man-(1-&gt;3)-[alpha-D-Man-(1-&gt;2)-alpha-D-Man-(1-&gt;3)-[alpha-D-Man-(1-&gt;2)-alpha-D-Man-(1-&gt;6)]-alpha-D-Man-(1-&gt;6)]-beta-D-Man-(1-&gt;4)-beta-D-GlcNAc-(1-&gt;4)-beta-D-GlcNAc)-L-asparaginyl-[protein] (N-glucan mannose isomer 9A1,2,3B1,2,3) + 4 H2O = N(4)-(alpha-D-Man-(1-&gt;3)-[alpha-D-Man-(1-&gt;3)-[alpha-D-Man-(1-&gt;6)]-alpha-D-Man-(1-&gt;6)]-beta-D-Man-(1-&gt;4)-beta-D-GlcNAc-(1-&gt;4)-beta-D-GlcNAc)-L-asparaginyl-[protein] (N-glucan mannose isomer 5A1,2) + 4 beta-D-mannose. The catalysed reaction is N(4)-(alpha-D-Man-(1-&gt;2)-alpha-D-Man-(1-&gt;2)-alpha-D-Man-(1-&gt;3)-[alpha-D-Man-(1-&gt;3)-[alpha-D-Man-(1-&gt;2)-alpha-D-Man-(1-&gt;6)]-alpha-D-Man-(1-&gt;6)]-beta-D-Man-(1-&gt;4)-beta-D-GlcNAc-(1-&gt;4)-beta-D-GlcNAc)-L-asparaginyl-[protein] (N-glucan mannose isomer 8A1,2,3B1,3) + 3 H2O = N(4)-(alpha-D-Man-(1-&gt;3)-[alpha-D-Man-(1-&gt;3)-[alpha-D-Man-(1-&gt;6)]-alpha-D-Man-(1-&gt;6)]-beta-D-Man-(1-&gt;4)-beta-D-GlcNAc-(1-&gt;4)-beta-D-GlcNAc)-L-asparaginyl-[protein] (N-glucan mannose isomer 5A1,2) + 3 beta-D-mannose. Its pathway is protein modification; protein glycosylation. Inhibited by both 1-deoxymannojirimycin and kifunensine. Involved in the maturation of Asn-linked oligosaccharides. Progressively trim alpha-1,2-linked mannose residues from Man(9)GlcNAc(2) to produce Man(5)GlcNAc(2). In Mus musculus (Mouse), this protein is Mannosyl-oligosaccharide 1,2-alpha-mannosidase IB (Man1a2).